Here is a 210-residue protein sequence, read N- to C-terminus: Pyridoxine/pyridoxamine 5'-phosphate oxidase (210 aa).

Substrate is bound by residues arginine 7–tyrosine 10 and lysine 65. FMN contacts are provided by residues arginine 60–lysine 65, phenylalanine 75–threonine 76, arginine 81, lysine 82, and glutamine 104. 3 residues coordinate substrate: tyrosine 122, arginine 126, and serine 130. FMN-binding positions include glutamine 139–serine 140 and tryptophan 183. Arginine 189–histidine 191 serves as a coordination point for substrate. Arginine 193 lines the FMN pocket.

This sequence belongs to the pyridoxamine 5'-phosphate oxidase family. In terms of assembly, homodimer. FMN serves as cofactor.

It catalyses the reaction pyridoxamine 5'-phosphate + O2 + H2O = pyridoxal 5'-phosphate + H2O2 + NH4(+). The enzyme catalyses pyridoxine 5'-phosphate + O2 = pyridoxal 5'-phosphate + H2O2. It participates in cofactor metabolism; pyridoxal 5'-phosphate salvage; pyridoxal 5'-phosphate from pyridoxamine 5'-phosphate: step 1/1. Its pathway is cofactor metabolism; pyridoxal 5'-phosphate salvage; pyridoxal 5'-phosphate from pyridoxine 5'-phosphate: step 1/1. Functionally, catalyzes the oxidation of either pyridoxine 5'-phosphate (PNP) or pyridoxamine 5'-phosphate (PMP) into pyridoxal 5'-phosphate (PLP). The sequence is that of Pyridoxine/pyridoxamine 5'-phosphate oxidase from Neisseria gonorrhoeae (strain ATCC 700825 / FA 1090).